Here is a 448-residue protein sequence, read N- to C-terminus: Phosphoglucosamine mutase (448 aa).

Catalysis depends on S100, which acts as the Phosphoserine intermediate. The Mg(2+) site is built by S100, D240, D242, and D244. At S100 the chain carries Phosphoserine.

It belongs to the phosphohexose mutase family. The cofactor is Mg(2+). Post-translationally, activated by phosphorylation.

The enzyme catalyses alpha-D-glucosamine 1-phosphate = D-glucosamine 6-phosphate. Functionally, catalyzes the conversion of glucosamine-6-phosphate to glucosamine-1-phosphate. In Bacillus mycoides (strain KBAB4) (Bacillus weihenstephanensis), this protein is Phosphoglucosamine mutase.